The following is a 363-amino-acid chain: Two-pore potassium channel 1 (363 aa).

The disordered stretch occupies residues 1 to 61 (MSSDAARTPL…DDVKIDEPPP (61 aa)). Over 1-78 (MSSDAARTPL…FSDLNPNLRR (78 aa)) the chain is Cytoplasmic. Residues 31–42 (SSRKRRLRRSRS) show a composition bias toward basic residues. Residues 79 to 99 (VIMFLALYLTIGTLCFYLVRD) traverse the membrane as a helical segment. The pore-forming intramembrane region spans 111–130 (DALYFCIVTMTTVGYGDLVP). The chain crosses the membrane as a helical span at residues 137–157 (LLACAFVFSGMVLVGHLLSRA). Topologically, residues 158–197 (ADYLVEKQEALLVRAFHLRQSFGPTDILKELHTNKLRYKC) are cytoplasmic. The helical transmembrane segment at 198 to 218 (YATCLVLVVLFIVGTIFLVMV) threads the bilayer. Positions 225-244 (SAFYCVCSTVTTLGYGDKSF) form an intramembrane region, pore-forming. The chain crosses the membrane as a helical span at residues 251-271 (LFAVFWILTSSICLAQFFLYV). The Cytoplasmic portion of the chain corresponds to 272-363 (AELNTENKQR…LAQTTSQIQR (92 aa)). EF-hand domains are found at residues 288–323 (LTRRITNNDLEAADLDEDGVVGAAEFIVYKLKEMGK) and 327–362 (KDISGIMDEFEQLDYDESGTLTTSDIVLAQTTSQIQ). The short motif at 296–298 (DLE) is the Endoplasmic reticulum release signal element. Ca(2+) contacts are provided by aspartate 301, aspartate 303, aspartate 305, glutamate 312, aspartate 340, aspartate 342, serine 344, threonine 346, and aspartate 351.

Belongs to the two pore domain potassium channel (TC 1.A.1.7) family. As to quaternary structure, homodimer. Interacts with GRF1 and GRF6, but only GRF6 modulates the channel activity. Phosphorylation at Ser-42 increases and stabilizes the interaction with 14-3-3 proteins. In terms of tissue distribution, detected in mesophyll cells, guard cells and vascular tissues of the leaves. Expressed in the hilum, where the funiculus is attached during fruit maturation and in the embryo. Also expressed at a lower level in seedlings, root tips and elongation zones, and flowers. Could be detected in mitotically active tissues.

The protein resides in the vacuole membrane. With respect to regulation, could be activated by protein kinase C. Strongly induced by calcium. Blocked by barium, tetraethylammonium (TEA), quinine and quinidine. In terms of biological role, voltage-independent, large conductance and potassium-selective tonoplast ion channel. Regulated by cytoplasmic calcium and pH. Does not mediate slow-vacuolar (SV) ionic currents, but essential to establish VK currents. Has some permeability for Rb(+) and NH(4)(+), but none for Na(+), Cs(+) or Li(+). Involved in intracellular K(+) redistribution and/or K(+) retranslocation between different tissues. In Arabidopsis thaliana (Mouse-ear cress), this protein is Two-pore potassium channel 1 (TPK1).